The primary structure comprises 490 residues: Probable cytosol aminopeptidase (490 aa).

2 residues coordinate Mn(2+): Lys-262 and Asp-267. Residue Lys-274 is part of the active site. Asp-285, Asp-344, and Glu-346 together coordinate Mn(2+). Arg-348 is an active-site residue.

It belongs to the peptidase M17 family. Mn(2+) serves as cofactor.

The protein localises to the cytoplasm. It catalyses the reaction Release of an N-terminal amino acid, Xaa-|-Yaa-, in which Xaa is preferably Leu, but may be other amino acids including Pro although not Arg or Lys, and Yaa may be Pro. Amino acid amides and methyl esters are also readily hydrolyzed, but rates on arylamides are exceedingly low.. The enzyme catalyses Release of an N-terminal amino acid, preferentially leucine, but not glutamic or aspartic acids.. Functionally, presumably involved in the processing and regular turnover of intracellular proteins. Catalyzes the removal of unsubstituted N-terminal amino acids from various peptides. The sequence is that of Probable cytosol aminopeptidase from Xanthomonas oryzae pv. oryzae (strain MAFF 311018).